Consider the following 232-residue polypeptide: Ribose-5-phosphate isomerase A (232 aa).

Substrate-binding positions include 31–34 (TGST), 87–90 (DGAD), and 100–103 (KGGG). The active-site Proton acceptor is the Glu109. Position 127 (Lys127) interacts with substrate.

Belongs to the ribose 5-phosphate isomerase family. Homodimer.

It catalyses the reaction aldehydo-D-ribose 5-phosphate = D-ribulose 5-phosphate. It participates in carbohydrate degradation; pentose phosphate pathway; D-ribose 5-phosphate from D-ribulose 5-phosphate (non-oxidative stage): step 1/1. Catalyzes the reversible conversion of ribose-5-phosphate to ribulose 5-phosphate. In Bifidobacterium adolescentis (strain ATCC 15703 / DSM 20083 / NCTC 11814 / E194a), this protein is Ribose-5-phosphate isomerase A.